A 471-amino-acid polypeptide reads, in one-letter code: Ubiquitin carboxyl-terminal hydrolase calypso (471 aa).

The UCH catalytic domain occupies 45 to 276; sequence GWLELESDPG…IRFNLMAVVP (232 aa). C131 (nucleophile) is an active-site residue. The active-site Proton donor is H213. Positions 375–403 constitute a ULD domain; that stretch reads NYDKFICTFLSMLAHQGVLGELVSQHLLP. Residues 405-471 form a positively charged C-terminal tail required for binding nucleosomes region; the sequence is KKVSGQGAAN…KGRNKCRKRK (67 aa). Residues 410–471 are disordered; it reads QGAANRISKQ…KGRNKCRKRK (62 aa). Positions 420–447 are enriched in low complexity; it reads STTASAGGSTTGATASTPKTQQQQAAAA. The span at 457-471 shows a compositional bias: basic residues; that stretch reads PGRRRKGRNKCRKRK.

The protein belongs to the peptidase C12 family. BAP1 subfamily. In terms of assembly, catalytic component of the polycomb repressive deubiquitinase (PR-DUB) complex, at least composed of caly/calypso, Asx and sba (MBD5/6 homolog). The PR-DUB complex associates with nucleosomes to mediate deubiquitination of histone H2AK118ub1 substrates; the association requires the positively charged C-terminal tail of caly, probably due to direct binding of DNA. Interacts (via ULD domain) with Asx (via DEUBAD domain); the interaction produces a stable heterodimer with a composite binding site for ubiquitin. Homodimerizes (via coiled-coil hinge-region between the UCH and ULD domains) to mediate assembly of 2 copies of the caly-Asx heterodimer into a bisymmetric tetramer; dimerization enhances PR-DUB association with nucleosomes.

The protein resides in the nucleus. It carries out the reaction Thiol-dependent hydrolysis of ester, thioester, amide, peptide and isopeptide bonds formed by the C-terminal Gly of ubiquitin (a 76-residue protein attached to proteins as an intracellular targeting signal).. Functionally, catalytic component of the polycomb repressive deubiquitinase (PR-DUB) complex, a complex that specifically mediates deubiquitination of histone H2A monoubiquitinated at 'Lys-119' (H2AK118ub1). Mediates bisymmetric organization of the PR-DUB complex and is involved in association with nucleosomes to mediate deubiquitination. Does not deubiquitinate monoubiquitinated histone H2B. Required to maintain the transcriptionally repressive state of homeotic genes throughout development. The PR-DUB complex has weak or no activity toward 'Lys-48'- and 'Lys-63'-linked polyubiquitin chains. Polycomb group (PcG) protein. The protein is Ubiquitin carboxyl-terminal hydrolase calypso of Drosophila yakuba (Fruit fly).